Reading from the N-terminus, the 248-residue chain is Biosynthetic peptidoglycan transglycosylase (248 aa).

The helical transmembrane segment at 20 to 42 threads the bilayer; sequence WLRWLMAAPLLFAAASVLQVLIL.

The protein belongs to the glycosyltransferase 51 family.

Its subcellular location is the cell inner membrane. The catalysed reaction is [GlcNAc-(1-&gt;4)-Mur2Ac(oyl-L-Ala-gamma-D-Glu-L-Lys-D-Ala-D-Ala)](n)-di-trans,octa-cis-undecaprenyl diphosphate + beta-D-GlcNAc-(1-&gt;4)-Mur2Ac(oyl-L-Ala-gamma-D-Glu-L-Lys-D-Ala-D-Ala)-di-trans,octa-cis-undecaprenyl diphosphate = [GlcNAc-(1-&gt;4)-Mur2Ac(oyl-L-Ala-gamma-D-Glu-L-Lys-D-Ala-D-Ala)](n+1)-di-trans,octa-cis-undecaprenyl diphosphate + di-trans,octa-cis-undecaprenyl diphosphate + H(+). It participates in cell wall biogenesis; peptidoglycan biosynthesis. Functionally, peptidoglycan polymerase that catalyzes glycan chain elongation from lipid-linked precursors. This is Biosynthetic peptidoglycan transglycosylase from Xanthomonas euvesicatoria pv. vesicatoria (strain 85-10) (Xanthomonas campestris pv. vesicatoria).